Reading from the N-terminus, the 353-residue chain is Uroporphyrinogen decarboxylase (353 aa).

Substrate-binding positions include 33–37, D82, Y158, S213, and H332; that span reads RQAGR.

Belongs to the uroporphyrinogen decarboxylase family. As to quaternary structure, homodimer.

It is found in the cytoplasm. The enzyme catalyses uroporphyrinogen III + 4 H(+) = coproporphyrinogen III + 4 CO2. Its pathway is porphyrin-containing compound metabolism; protoporphyrin-IX biosynthesis; coproporphyrinogen-III from 5-aminolevulinate: step 4/4. Functionally, catalyzes the decarboxylation of four acetate groups of uroporphyrinogen-III to yield coproporphyrinogen-III. The protein is Uroporphyrinogen decarboxylase of Gluconobacter oxydans (strain 621H) (Gluconobacter suboxydans).